Reading from the N-terminus, the 186-residue chain is Tumor necrosis factor alpha-induced protein 8-like protein 2 (186 aa).

It belongs to the TNFAIP8 family. TNFAIP8L2 subfamily.

Acts as a negative regulator of innate and adaptive immunity by maintaining immune homeostasis. Negative regulator of Toll-like receptor and T-cell receptor function. Prevents hyperresponsiveness of the immune system and maintains immune homeostasis. Inhibits jun/ap1 and NF-kappa-B activation. Promotes Fas-induced apoptosis. The polypeptide is Tumor necrosis factor alpha-induced protein 8-like protein 2 (tnfaip8l2) (Xenopus laevis (African clawed frog)).